Here is a 147-residue protein sequence, read N- to C-terminus: Large ribosomal subunit protein bL21 (147 aa).

The segment at 125–147 (EEVEAAPKAKKAAPKAKKEATKE) is disordered.

It belongs to the bacterial ribosomal protein bL21 family. As to quaternary structure, part of the 50S ribosomal subunit. Contacts protein L20.

Its function is as follows. This protein binds to 23S rRNA in the presence of protein L20. This Flavobacterium johnsoniae (strain ATCC 17061 / DSM 2064 / JCM 8514 / BCRC 14874 / CCUG 350202 / NBRC 14942 / NCIMB 11054 / UW101) (Cytophaga johnsonae) protein is Large ribosomal subunit protein bL21.